Here is an 86-residue protein sequence, read N- to C-terminus: U2-sicaritoxin-Li1a (86 aa).

The signal sequence occupies residues 1–20 (MTFKLFVVVTLVLAIYVATA). Residues 21–33 (EEAMKDDSEPAER) constitute a propeptide that is removed on maturation. Cystine bridges form between Cys-35–Cys-53, Cys-42–Cys-62, Cys-52–Cys-71, and Cys-64–Cys-69.

The protein belongs to the neurotoxin 39 family. Expressed by the venom gland.

The protein localises to the secreted. In terms of biological role, toxin active against S.frugiperda larvae. May act on sodium channels (Nav). In Loxosceles intermedia (Brown spider), this protein is U2-sicaritoxin-Li1a.